The primary structure comprises 443 residues: ATP-dependent protease ATPase subunit HslU (443 aa).

ATP-binding positions include Ile-19, 61–66 (GVGKTE), Asp-256, Glu-321, and Arg-393.

This sequence belongs to the ClpX chaperone family. HslU subfamily. As to quaternary structure, a double ring-shaped homohexamer of HslV is capped on each side by a ring-shaped HslU homohexamer. The assembly of the HslU/HslV complex is dependent on binding of ATP.

It is found in the cytoplasm. Functionally, ATPase subunit of a proteasome-like degradation complex; this subunit has chaperone activity. The binding of ATP and its subsequent hydrolysis by HslU are essential for unfolding of protein substrates subsequently hydrolyzed by HslV. HslU recognizes the N-terminal part of its protein substrates and unfolds these before they are guided to HslV for hydrolysis. This is ATP-dependent protease ATPase subunit HslU from Ralstonia pickettii (strain 12J).